The chain runs to 276 residues: Probable NADH-ubiquinone oxidoreductase 30.4 kDa subunit, mitochondrial (276 aa).

Residues 248-276 (EPVGEGKDFTPESFKLPTPQPEPEQEEKK) form a disordered region.

Belongs to the complex I 30 kDa subunit family. In terms of assembly, complex I is composed of about 30 different subunits. This is a component of the iron-sulfur protein fraction.

It localises to the mitochondrion inner membrane. It catalyses the reaction a ubiquinone + NADH + 5 H(+)(in) = a ubiquinol + NAD(+) + 4 H(+)(out). In terms of biological role, core subunit of the mitochondrial membrane respiratory chain NADH dehydrogenase (Complex I) that is believed to belong to the minimal assembly required for catalysis. Complex I functions in the transfer of electrons from NADH to the respiratory chain. The immediate electron acceptor for the enzyme is believed to be ubiquinone. Essential for N-alkane assimilation. The polypeptide is Probable NADH-ubiquinone oxidoreductase 30.4 kDa subunit, mitochondrial (ALI1) (Candida maltosa (Yeast)).